Consider the following 289-residue polypeptide: MQTASLSVFPQYLLPKHALTLLAGRIANAEAGNLTTLLIRWFVWRYGVNMNEAINPDIRSYRTFNEFFTRPLLLENRPISDADYVCPADGVISQLGVISGDQIFQAKGHNYSAAALLGGDTRLAEKFYGGNFATLYLSPRDYHRVHMPVDARVSRMIYVPGDLFSVNAKTVRGVPGLFARNERVICIFESEFGPFALVLVGATIVGSVATVWHGVVNPRDSEGARDVQEWRYDSADLVLKKGDEMGRFQLGSTVVMLFPKNEIAFNPAWAPGRTIRFGETMATKADPAK.

Active-site charge relay system; for autoendoproteolytic cleavage activity residues include aspartate 89, histidine 146, and serine 252. Catalysis depends on serine 252, which acts as the Schiff-base intermediate with substrate; via pyruvic acid; for decarboxylase activity. Serine 252 carries the post-translational modification Pyruvic acid (Ser); by autocatalysis.

It belongs to the phosphatidylserine decarboxylase family. PSD-B subfamily. Prokaryotic type I sub-subfamily. As to quaternary structure, heterodimer of a large membrane-associated beta subunit and a small pyruvoyl-containing alpha subunit. Pyruvate serves as cofactor. In terms of processing, is synthesized initially as an inactive proenzyme. Formation of the active enzyme involves a self-maturation process in which the active site pyruvoyl group is generated from an internal serine residue via an autocatalytic post-translational modification. Two non-identical subunits are generated from the proenzyme in this reaction, and the pyruvate is formed at the N-terminus of the alpha chain, which is derived from the carboxyl end of the proenzyme. The autoendoproteolytic cleavage occurs by a canonical serine protease mechanism, in which the side chain hydroxyl group of the serine supplies its oxygen atom to form the C-terminus of the beta chain, while the remainder of the serine residue undergoes an oxidative deamination to produce ammonia and the pyruvoyl prosthetic group on the alpha chain. During this reaction, the Ser that is part of the protease active site of the proenzyme becomes the pyruvoyl prosthetic group, which constitutes an essential element of the active site of the mature decarboxylase.

The protein resides in the cell membrane. It carries out the reaction a 1,2-diacyl-sn-glycero-3-phospho-L-serine + H(+) = a 1,2-diacyl-sn-glycero-3-phosphoethanolamine + CO2. It participates in phospholipid metabolism; phosphatidylethanolamine biosynthesis; phosphatidylethanolamine from CDP-diacylglycerol: step 2/2. Catalyzes the formation of phosphatidylethanolamine (PtdEtn) from phosphatidylserine (PtdSer). This Nitrosospira multiformis (strain ATCC 25196 / NCIMB 11849 / C 71) protein is Phosphatidylserine decarboxylase proenzyme.